Reading from the N-terminus, the 220-residue chain is Peptidyl-tRNA hydrolase (220 aa).

TRNA is bound at residue Tyr-14. His-19 acts as the Proton acceptor in catalysis. 3 residues coordinate tRNA: Phe-60, Asn-62, and Asn-106.

The protein belongs to the PTH family. As to quaternary structure, monomer.

The protein localises to the cytoplasm. It catalyses the reaction an N-acyl-L-alpha-aminoacyl-tRNA + H2O = an N-acyl-L-amino acid + a tRNA + H(+). Hydrolyzes ribosome-free peptidyl-tRNAs (with 1 or more amino acids incorporated), which drop off the ribosome during protein synthesis, or as a result of ribosome stalling. Its function is as follows. Catalyzes the release of premature peptidyl moieties from peptidyl-tRNA molecules trapped in stalled 50S ribosomal subunits, and thus maintains levels of free tRNAs and 50S ribosomes. The polypeptide is Peptidyl-tRNA hydrolase (Campylobacter hominis (strain ATCC BAA-381 / DSM 21671 / CCUG 45161 / LMG 19568 / NCTC 13146 / CH001A)).